Reading from the N-terminus, the 541-residue chain is Carboxypeptidase Y homolog A (541 aa).

Positions 1–17 are cleaved as a signal peptide; sequence MKVATSALLIGAAAAQQ. The propeptide occupies 18–125; sequence QQILKFPDSF…KLEQYSLRAK (108 aa). 5 cysteine pairs are disulfide-bonded: C179-C418, C313-C327, C337-C360, C344-C353, and C382-C388. N210 carries N-linked (GlcNAc...) asparagine glycosylation. The active site involves S266. D457 is an active-site residue. An N-linked (GlcNAc...) asparagine glycan is attached at N505. The active site involves H516.

Belongs to the peptidase S10 family.

It is found in the vacuole. It carries out the reaction Release of a C-terminal amino acid with broad specificity.. In terms of biological role, vacuolar carboxypeptidase involved in degradation of small peptides. Digests preferentially peptides containing an aliphatic or hydrophobic residue in P1' position, as well as methionine, leucine or phenylalanine in P1 position of ester substrate. The sequence is that of Carboxypeptidase Y homolog A (cpyA) from Pyrenophora tritici-repentis (strain Pt-1C-BFP) (Wheat tan spot fungus).